Consider the following 448-residue polypeptide: Deoxyguanosinetriphosphate triphosphohydrolase-like protein (448 aa).

An HD domain is found at 67-260 (RLTHSLEVSQ…MELADDIAYG (194 aa)).

It belongs to the dGTPase family. Type 2 subfamily.

This Aliivibrio fischeri (strain ATCC 700601 / ES114) (Vibrio fischeri) protein is Deoxyguanosinetriphosphate triphosphohydrolase-like protein.